The chain runs to 165 residues: Ribosome maturation factor RimM (165 aa).

One can recognise a PRC barrel domain in the interval 94–165; that stretch reads EDEFYIADLN…YVILNYQTKV (72 aa).

Belongs to the RimM family. In terms of assembly, binds ribosomal protein uS19.

The protein resides in the cytoplasm. Its function is as follows. An accessory protein needed during the final step in the assembly of 30S ribosomal subunit, possibly for assembly of the head region. Essential for efficient processing of 16S rRNA. May be needed both before and after RbfA during the maturation of 16S rRNA. It has affinity for free ribosomal 30S subunits but not for 70S ribosomes. This is Ribosome maturation factor RimM from Rickettsia typhi (strain ATCC VR-144 / Wilmington).